The sequence spans 260 residues: GTP cyclohydrolase FolE2 (260 aa).

The protein belongs to the GTP cyclohydrolase IV family.

It catalyses the reaction GTP + H2O = 7,8-dihydroneopterin 3'-triphosphate + formate + H(+). It functions in the pathway cofactor biosynthesis; 7,8-dihydroneopterin triphosphate biosynthesis; 7,8-dihydroneopterin triphosphate from GTP: step 1/1. Converts GTP to 7,8-dihydroneopterin triphosphate. This Desulfosudis oleivorans (strain DSM 6200 / JCM 39069 / Hxd3) (Desulfococcus oleovorans) protein is GTP cyclohydrolase FolE2.